We begin with the raw amino-acid sequence, 490 residues long: GTPase Der (490 aa).

EngA-type G domains follow at residues Pro-3 to Leu-166 and Ile-203 to Thr-376. Residues Gly-9–Ser-16, Asp-56–Ile-60, Asn-118–Asp-121, Gly-209–Ser-216, Asp-256–Val-260, and Asn-321–Asp-324 contribute to the GTP site. In terms of domain architecture, KH-like spans Arg-377–Glu-461.

The protein belongs to the TRAFAC class TrmE-Era-EngA-EngB-Septin-like GTPase superfamily. EngA (Der) GTPase family. As to quaternary structure, associates with the 50S ribosomal subunit.

Functionally, GTPase that plays an essential role in the late steps of ribosome biogenesis. This is GTPase Der from Escherichia coli O7:K1 (strain IAI39 / ExPEC).